The sequence spans 451 residues: Tubulin alpha-1A chain (451 aa).

The MREC motif signature appears at 1–4; the sequence is MREC. Residues Gln-11, Glu-71, Ser-140, Gly-144, Thr-145, Thr-179, Asn-206, and Asn-228 each contribute to the GTP site. Residue Glu-71 participates in Mg(2+) binding. Glu-254 is a catalytic residue. Positions 432–451 are disordered; sequence YEEVGVDSVEGEGEEEGEEY. Glu-445 is modified (5-glutamyl polyglutamate).

This sequence belongs to the tubulin family. Dimer of alpha and beta chains. A typical microtubule is a hollow water-filled tube with an outer diameter of 25 nm and an inner diameter of 15 nM. Alpha-beta heterodimers associate head-to-tail to form protofilaments running lengthwise along the microtubule wall with the beta-tubulin subunit facing the microtubule plus end conferring a structural polarity. Microtubules usually have 13 protofilaments but different protofilament numbers can be found in some organisms and specialized cells. Mg(2+) is required as a cofactor. Some glutamate residues at the C-terminus are polyglycylated, resulting in polyglycine chains on the gamma-carboxyl group. Glycylation is mainly limited to tubulin incorporated into axonemes (cilia and flagella) whereas glutamylation is prevalent in neuronal cells, centrioles, axonemes, and the mitotic spindle. Both modifications can coexist on the same protein on adjacent residues, and lowering polyglycylation levels increases polyglutamylation, and reciprocally. The precise function of polyglycylation is still unclear. In terms of processing, some glutamate residues at the C-terminus are polyglutamylated, resulting in polyglutamate chains on the gamma-carboxyl group. Polyglutamylation plays a key role in microtubule severing by spastin (SPAST). SPAST preferentially recognizes and acts on microtubules decorated with short polyglutamate tails: severing activity by SPAST increases as the number of glutamates per tubulin rises from one to eight, but decreases beyond this glutamylation threshold. Post-translationally, undergoes a tyrosination/detyrosination cycle, the cyclic removal and re-addition of a C-terminal tyrosine residue by the enzymes tubulin tyrosine carboxypeptidase (MATCAP1, VASH1 or VASH2) and tubulin tyrosine ligase (TTL), respectively. Tyrosination promotes microtubule interaction with CAP-Gly microtubule plus-end tracking proteins. Tyrosinated tubulins regulate the initiation of dynein-driven motility. In terms of processing, detyrosination is involved in metaphase plate congression by guiding chromosomes during mitosis. Detyrosination increases microtubules-dependent mechanotransduction in dystrophic cardiac and skeletal muscle. In cardiomyocytes, detyrosinated microtubules are required to resist to contractile compression during contraction.

Its subcellular location is the cytoplasm. It is found in the cytoskeleton. The enzyme catalyses GTP + H2O = GDP + phosphate + H(+). Functionally, tubulin is the major constituent of microtubules, a cylinder consisting of laterally associated linear protofilaments composed of alpha- and beta-tubulin heterodimers. Microtubules grow by the addition of GTP-tubulin dimers to the microtubule end, where a stabilizing cap forms. Below the cap, tubulin dimers are in GDP-bound state, owing to GTPase activity of alpha-tubulin. This chain is Tubulin alpha-1A chain (TUBA1A), found in Gallus gallus (Chicken).